We begin with the raw amino-acid sequence, 123 residues long: MPTVNQLIRKPRIAPVKRNKVPALQANPQKRGVCTRVYTTTPKKPNSALRKVAKVRLTNGFEVIGYIPGEGHNLQEHSVVMIRGGRVKDLPGVRYHIIRGVLDTQGVKNRKQRRSKYGAKRPK.

The residue at position 89 (Asp-89) is a 3-methylthioaspartic acid.

This sequence belongs to the universal ribosomal protein uS12 family. As to quaternary structure, part of the 30S ribosomal subunit. Contacts proteins S8 and S17. May interact with IF1 in the 30S initiation complex.

Functionally, with S4 and S5 plays an important role in translational accuracy. Its function is as follows. Interacts with and stabilizes bases of the 16S rRNA that are involved in tRNA selection in the A site and with the mRNA backbone. Located at the interface of the 30S and 50S subunits, it traverses the body of the 30S subunit contacting proteins on the other side and probably holding the rRNA structure together. The combined cluster of proteins S8, S12 and S17 appears to hold together the shoulder and platform of the 30S subunit. The sequence is that of Small ribosomal subunit protein uS12 from Brucella anthropi (strain ATCC 49188 / DSM 6882 / CCUG 24695 / JCM 21032 / LMG 3331 / NBRC 15819 / NCTC 12168 / Alc 37) (Ochrobactrum anthropi).